The following is a 350-amino-acid chain: C5a anaphylatoxin chemotactic receptor 1 (350 aa).

At 1–36 (APMENSTYDYTNYDSLGTLDPSTPVDNTVRRLRPTT) the chain is on the extracellular side. Asparagine 5 carries N-linked (GlcNAc...) asparagine glycosylation. A sulfotyrosine mark is found at tyrosine 10 and tyrosine 13. Residues 37-63 (IVALVIYMAVFLVGVPGNALVVWVTAL) form a helical membrane-spanning segment. Over 64–68 (EAKRT) the chain is Cytoplasmic. A helical transmembrane segment spans residues 69–92 (VNAIWFLNLAVADLLSCLALPILF). At 93-109 (VSIIQEGHWPFGRAACS) the chain is on the extracellular side. A disulfide bridge connects residues cysteine 108 and cysteine 187. A helical membrane pass occupies residues 110–131 (VLPSLILLNMYASILLLATISA). Residues 132-152 (DRFLLVFNPIWCQNTRGAGLA) are Cytoplasmic-facing. A helical membrane pass occupies residues 153-173 (WLACCVAWGLALLLTIPSFLY). At 174–200 (RKVLQDDYPPKTTCGVDYGHEGVRAER) the chain is on the extracellular side. A helical transmembrane segment spans residues 201–226 (AVAIVRLVVGFLLPLFTLSVCYTFLL). Residues 227–242 (LRTWSRNGTRSTKTLK) lie on the Cytoplasmic side of the membrane. The helical transmembrane segment at 243 to 265 (VVVAVVVSFFIFWLPYQVMGMIL) threads the bilayer. At 266–282 (ALLHPSSATFRWAIRLD) the chain is on the extracellular side. The helical transmembrane segment at 283–303 (PLCIALAYVNCCINPIIYVVA) threads the bilayer. Topologically, residues 304–350 (GKGFQGQLRKSLPSLLRNVLAEESVIQGSKSFSRSTVDTVADKCQAV) are cytoplasmic. Phosphoserine occurs at positions 314, 317, 327, 332, 334, and 338.

It belongs to the G-protein coupled receptor 1 family. As to quaternary structure, homodimer. May also form higher-order oligomers. Interacts (when phosphorylated) with ARRB1 and ARRB2; the interaction is associated with internalization of C5aR. Sulfation plays a critical role in the association of C5aR with C5a, but no significant role in the ability of the receptor to transduce a signal and mobilize calcium in response to a small peptide agonist. In terms of processing, phosphorylated on serine residues in response to C5a binding, resulting in internalization of the receptor and short-term desensitization to C5a.

The protein localises to the cell membrane. The protein resides in the cytoplasmic vesicle. Receptor for the chemotactic and inflammatory peptide anaphylatoxin C5a. The ligand interacts with at least two sites on the receptor: a high-affinity site on the extracellular N-terminus, and a second site in the transmembrane region which activates downstream signaling events. Receptor activation stimulates chemotaxis, granule enzyme release, intracellular calcium release and superoxide anion production. The sequence is that of C5a anaphylatoxin chemotactic receptor 1 (C5AR1) from Oryctolagus cuniculus (Rabbit).